The primary structure comprises 406 residues: Phloroisovalerophenone synthase (406 aa).

Residue Cys-171 is part of the active site.

The protein belongs to the thiolase-like superfamily. Chalcone/stilbene synthases family.

The catalysed reaction is 3-methylbutanoyl-CoA + 3 malonyl-CoA + 3 H(+) = phlorisovalerophenone + 3 CO2 + 4 CoA. In terms of biological role, produces 3-methyl-1-(2,4,6-trihydroxyphenyl)butan-1-one (phloroisovalerophenone). The sequence is that of Phloroisovalerophenone synthase (VPS) from Psilotum nudum (Whisk fern).